Consider the following 378-residue polypeptide: D-alanine--D-alanine ligase (378 aa).

The ATP-grasp domain occupies 157-368 (KVVFESAGLS…YGDLIDELIH (212 aa)). 189 to 244 (VDKLGFPVFVKPARAGSSMGISKVDSMEGLDAAIDEARRHDLKLVIEAGIVGREIE) is an ATP binding site. Positions 322, 335, and 337 each coordinate Mg(2+).

Belongs to the D-alanine--D-alanine ligase family. It depends on Mg(2+) as a cofactor. Mn(2+) serves as cofactor.

The protein resides in the cytoplasm. It carries out the reaction 2 D-alanine + ATP = D-alanyl-D-alanine + ADP + phosphate + H(+). The protein operates within cell wall biogenesis; peptidoglycan biosynthesis. Its function is as follows. Cell wall formation. In Paenarthrobacter aurescens (strain TC1), this protein is D-alanine--D-alanine ligase.